A 281-amino-acid polypeptide reads, in one-letter code: 2-dehydro-3-deoxyphosphooctonate aldolase (281 aa).

This sequence belongs to the KdsA family.

The protein localises to the cytoplasm. The catalysed reaction is D-arabinose 5-phosphate + phosphoenolpyruvate + H2O = 3-deoxy-alpha-D-manno-2-octulosonate-8-phosphate + phosphate. It functions in the pathway carbohydrate biosynthesis; 3-deoxy-D-manno-octulosonate biosynthesis; 3-deoxy-D-manno-octulosonate from D-ribulose 5-phosphate: step 2/3. It participates in bacterial outer membrane biogenesis; lipopolysaccharide biosynthesis. This chain is 2-dehydro-3-deoxyphosphooctonate aldolase, found in Pseudomonas syringae pv. tomato (strain ATCC BAA-871 / DC3000).